A 446-amino-acid chain; its full sequence is D(3) dopamine receptor (446 aa).

Residues 1–32 are Extracellular-facing; sequence MAPLSQISSHINSTCGAENSTGVNRARPHAYY. N12 and N19 each carry an N-linked (GlcNAc...) asparagine glycan. Residues 33 to 55 form a helical membrane-spanning segment; sequence ALSYCALILAIIFGNGLVCAAVL. The Cytoplasmic segment spans residues 56–65; that stretch reads RERALQTTTN. A helical transmembrane segment spans residues 66-88; the sequence is YLVVSLAVADLLVATLVMPWVVY. Topologically, residues 89 to 104 are extracellular; it reads LEVTGGVWNFSRICCD. N97 carries an N-linked (GlcNAc...) asparagine glycan. C103 and C181 are joined by a disulfide. Residues 105–126 traverse the membrane as a helical segment; sequence VFVTLDVMMCTASILNLCAISI. Over 127 to 149 the chain is Cytoplasmic; that stretch reads DRYTAVVMPVHYQHGTGQSSCRR. The helical transmembrane segment at 150 to 170 threads the bilayer; it reads VALMITAVWVLAFAVSCPLLF. Over 171-187 the chain is Extracellular; it reads GFNTTGDPSICSISNPD. N-linked (GlcNAc...) asparagine glycosylation is present at N173. The chain crosses the membrane as a helical span at residues 188–209; sequence FVIYSSVVSFYVPFGVTVLVYA. Topologically, residues 210–375 are cytoplasmic; it reads RIYMVLRQRR…VPLREKKATQ (166 aa). The chain crosses the membrane as a helical span at residues 376 to 397; sequence MVVIVLGAFIVCWLPFFLTHVL. At 398 to 412 the chain is on the extracellular side; the sequence is NTHCQACHVSPELYR. C401 and C404 are disulfide-bonded. The helical transmembrane segment at 413–432 threads the bilayer; the sequence is ATTWLGYVNSALNPVIYTTF. Residues 433–446 lie on the Cytoplasmic side of the membrane; sequence NIEFRKAFLKILSC.

The protein belongs to the G-protein coupled receptor 1 family. Interacts with CLIC6. Interacts with GRK4. Interacts with PALM. Interacts with FLNA (via filamin repeat 21); increases PKA-mediated phosphorylation of FLNA. Phosphorylated by GRK4. In terms of processing, palmitoylated.

The protein localises to the cell membrane. In terms of biological role, dopamine receptor whose activity is mediated by G proteins which inhibit adenylyl cyclase. Promotes cell proliferation. This chain is D(3) dopamine receptor (Drd3), found in Mus musculus (Mouse).